Here is a 273-residue protein sequence, read N- to C-terminus: Ribosomal RNA small subunit methyltransferase A (273 aa).

S-adenosyl-L-methionine-binding residues include Asn18, Leu20, Gly45, Glu66, Asp91, and Asn113.

Belongs to the class I-like SAM-binding methyltransferase superfamily. rRNA adenine N(6)-methyltransferase family. RsmA subfamily.

It localises to the cytoplasm. The enzyme catalyses adenosine(1518)/adenosine(1519) in 16S rRNA + 4 S-adenosyl-L-methionine = N(6)-dimethyladenosine(1518)/N(6)-dimethyladenosine(1519) in 16S rRNA + 4 S-adenosyl-L-homocysteine + 4 H(+). In terms of biological role, specifically dimethylates two adjacent adenosines (A1518 and A1519) in the loop of a conserved hairpin near the 3'-end of 16S rRNA in the 30S particle. May play a critical role in biogenesis of 30S subunits. This Salmonella choleraesuis (strain SC-B67) protein is Ribosomal RNA small subunit methyltransferase A.